Here is a 362-residue protein sequence, read N- to C-terminus: 3-dehydroquinate synthase (362 aa).

NAD(+) is bound by residues 71-76 (DGEQYK), 105-109 (GVVGD), 129-130 (TT), Lys142, Lys151, and 169-172 (CLKT). Residues Glu184, His247, and His264 each contribute to the Zn(2+) site.

Belongs to the sugar phosphate cyclases superfamily. Dehydroquinate synthase family. The cofactor is Co(2+). Requires Zn(2+) as cofactor. It depends on NAD(+) as a cofactor.

It is found in the cytoplasm. It catalyses the reaction 7-phospho-2-dehydro-3-deoxy-D-arabino-heptonate = 3-dehydroquinate + phosphate. It participates in metabolic intermediate biosynthesis; chorismate biosynthesis; chorismate from D-erythrose 4-phosphate and phosphoenolpyruvate: step 2/7. In terms of biological role, catalyzes the conversion of 3-deoxy-D-arabino-heptulosonate 7-phosphate (DAHP) to dehydroquinate (DHQ). The sequence is that of 3-dehydroquinate synthase from Escherichia coli O6:K15:H31 (strain 536 / UPEC).